The following is a 352-amino-acid chain: Lipid storage droplets surface-binding protein 2 (352 aa).

2 disordered regions span residues 1 to 28 and 298 to 352; these read MASA…DQPK and NVEQ…VSSQ. Residues 298–309 are compositionally biased toward polar residues; sequence NVEQSGGSSSDA. Low complexity predominate over residues 315-329; sequence TTTSTTTTTTTSSTS.

It belongs to the perilipin family. As to expression, ubiquitous expression in early embryos. At stage 5 expression is restricted to the pole cells. At stage 11 expression is seen in the amnioserosa, refined to the fat body and midgut by stage 14. Also seen in the hindgut by the end of embryogenesis. Expression is seen in larval fat body (at protein level).

The protein localises to the cytoplasm. The protein resides in the lipid droplet. Functionally, essential for embryogenesis. Required for normal deposition of neutral lipids in the oocyte. The protein is Lipid storage droplets surface-binding protein 2 of Drosophila melanogaster (Fruit fly).